The chain runs to 261 residues: ClpXP adapter protein SpxH (261 aa).

It belongs to the SpxH family. As to quaternary structure, interacts with Spx.

The protein localises to the cytoplasm. Its function is as follows. Adapter protein required for efficient degradation of Spx by ClpXP under non-stress conditions. Interaction with Spx stabilizes Spx and exposes the C-terminus of Spx for recognition and proteolysis by ClpXP. The polypeptide is ClpXP adapter protein SpxH (Staphylococcus aureus).